The sequence spans 1307 residues: MTQFEGFTNLYQVSKTLRFELIPQGKTLKHIQEQGFIEEDKARNDHYKELKPIIDRIYKTYADQCLQLVQLDWENLSAAIDSYRKEKTEETRNALIEEQATYRNAIHDYFIGRTDNLTDAINKRHAEIYKGLFKAELFNGKVLKQLGTVTTTEHENALLRSFDKFTTYFSGFYENRKNVFSAEDISTAIPHRIVQDNFPKFKENCHIFTRLITAVPSLREHFENVKKAIGIFVSTSIEEVFSFPFYNQLLTQTQIDLYNQLLGGISREAGTEKIKGLNEVLNLAIQKNDETAHIIASLPHRFIPLFKQILSDRNTLSFILEEFKSDEEVIQSFCKYKTLLRNENVLETAEALFNELNSIDLTHIFISHKKLETISSALCDHWDTLRNALYERRISELTGKITKSAKEKVQRSLKHEDINLQEIISAAGKELSEAFKQKTSEILSHAHAALDQPLPTTLKKQEEKEILKSQLDSLLGLYHLLDWFAVDESNEVDPEFSARLTGIKLEMEPSLSFYNKARNYATKKPYSVEKFKLNFQMPTLASGWDVNKEKNNGAILFVKNGLYYLGIMPKQKGRYKALSFEPTEKTSEGFDKMYYDYFPDAAKMIPKCSTQLKAVTAHFQTHTTPILLSNNFIEPLEITKEIYDLNNPEKEPKKFQTAYAKKTGDQKGYREALCKWIDFTRDFLSKYTKTTSIDLSSLRPSSQYKDLGEYYAELNPLLYHISFQRIAEKEIMDAVETGKLYLFQIYNKDFAKGHHGKPNLHTLYWTGLFSPENLAKTSIKLNGQAELFYRPKSRMKRMAHRLGEKMLNKKLKDQKTPIPDTLYQELYDYVNHRLSHDLSDEARALLPNVITKEVSHEIIKDRRFTSDKFFFHVPITLNYQAANSPSKFNQRVNAYLKEHPETPIIGIDRGERNLIYITVIDSTGKILEQRSLNTIQQFDYQKKLDNREKERVAARQAWSVVGTIKDLKQGYLSQVIHEIVDLMIHYQAVVVLENLNFGFKSKRTGIAEKAVYQQFEKMLIDKLNCLVLKDYPAEKVGGVLNPYQLTDQFTSFAKMGTQSGFLFYVPAPYTSKIDPLTGFVDPFVWKTIKNHESRKHFLEGFDFLHYDVKTGDFILHFKMNRNLSFQRGLPGFMPAWDIVFEKNETQFDAKGTPFIAGKRIVPVIENHRFTGRYRDLYPANELIALLEEKGIVFRDGSNILPKLLENDDSHAIDTMVALIRSVLQMRNSNAATGEDYINSPVRDLNGVCFDSRFQNPEWPMDADANGAYHIALKGQLLLNHLKESKDLKLQNGISNQDWLAYIQELRN.

Residues 1 to 35 (MTQFEGFTNLYQVSKTLRFELIPQGKTLKHIQEQG) form a WED-I (OBD-I) region. An REC1 (helical-I) region spans residues 36-320 (FIEEDKARND…SDRNTLSFIL (285 aa)). A crRNA-binding site is contributed by 47–51 (YKELK). Positions 74–106 (ENLSAAIDSYRKEKTEETRNALIEEQATYRNAI) form a coiled coil. CrRNA-binding positions include 175 to 176 (NR) and 307 to 310 (KQIL). Positions 321-526 (EEFKSDEEVI…ARNYATKKPY (206 aa)) are WED-II (helical-II). The segment at 527 to 598 (SVEKFKLNFQ…GFDKMYYDYF (72 aa)) is WED-II (OBD-I). The segment at residues 599-607 (PDAAKMIPK) is a DNA-binding region (PAM-binding on target DNA). The segment at 599-718 (PDAAKMIPKC…EYYAELNPLL (120 aa)) is PI (LHD). The WED-III (OBD-III) stretch occupies residues 719 to 884 (YHISFQRIAE…ITLNYQAANS (166 aa)). 752–761 (KGHHGKPNLH) serves as a coordination point for crRNA. A DNA-binding region (target DNA) is located at residues 780 to 783 (KLNG). Histidine 800 (for pre-crRNA processing) is an active-site residue. 806 to 808 (MLN) contributes to the crRNA binding site. Active-site for pre-crRNA processing residues include lysine 809 and lysine 860. Residues 885 to 940 (PSKFNQRVNAYLKEHPETPIIGIDRGERNLIYITVIDSTGKILEQRSLNTIQQFDY) form a ruvC-I region. The active-site For DNase activity of RuvC domain is aspartate 908. Residues 941–957 (QKKLDNREKERVAARQA) are bridge helix. Positions 951 to 968 (RVAARQAWSVVGTIKDLK) form a DNA-binding region, target DNA. A ruvC-II region spans residues 958-1066 (WSVVGTIKDL…TQSGFLFYVP (109 aa)). Glutamate 993 serves as the catalytic For DNase activity of RuvC domain. A DNA-binding region (target DNA) is located at residues 1051–1053 (SFA). Residues 1067 to 1262 (APYTSKIDPL…FQNPEWPMDA (196 aa)) are nuclease domain. The active-site For DNase activity of nuclease domain is arginine 1226. Aspartate 1263 (for DNase activity of RuvC domain) is an active-site residue. Residues 1263-1307 (DANGAYHIALKGQLLLNHLKESKDLKLQNGISNQDWLAYIQELRN) are ruvC-III.

The protein belongs to the CRISPR-associated endonuclease Cas12a family. Monomer. The cofactor is Mg(2+).

The enzyme catalyses Endonucleolytic cleavage to 5'-phosphodinucleotide and 5'-phosphooligonucleotide end-products.. It catalyses the reaction RNA = a 5'-hydroxy-ribonucleotide + n nucleoside-2',3'-cyclophosphates.. In terms of biological role, CRISPR (clustered regularly interspaced short palindromic repeat), is an adaptive immune system that provides protection against mobile genetic elements (viruses, transposable elements and conjugative plasmids). CRISPR clusters contain sequences complementary to antecedent mobile elements and target invading nucleic acids. CRISPR clusters are transcribed and processed into CRISPR RNA (crRNA). Recognizes a short motif in the CRISPR repeat sequences (the 5' PAM or protospacer adjacent motif, TTTN in this organism) to help distinguish self versus nonself, as targets within the bacterial CRISPR locus do not have PAMs. Has dsDNA endonuclease activity, results in staggered 4-base 5' overhangs 19 and 22 bases downstream of the PAM on the non-targeted and targeted strand respectively. Non-target strand cleavage by the RuvC domain is probably a prerequisite of target strand cleavage by the Nuc domain. Protects E.coli against plasmids and bacteriophage M13mp18, phage T4 with hydroxymethyl or unmodified (but not glycosylated) cytosines and to a lesser extent against lambda and VpaE1 phage. In this CRISPR system correct processing of pre-crRNA requires only this protein and the CRISPR locus. This is CRISPR-associated endonuclease Cas12a from Acidaminococcus sp. (strain BV3L6).